Consider the following 118-residue polypeptide: MNKKDARLRRARQTRAKIAEMKVNRLTVFRTNSHIYAQVFSECGTKVLASASTAEVEVRKELDGKGATAAAATVVGKRIAEKAKAAGVETVAFDRAGFRFHGRVKALADAAREAGLKF.

It belongs to the universal ribosomal protein uL18 family. As to quaternary structure, part of the 50S ribosomal subunit; part of the 5S rRNA/L5/L18/L25 subcomplex. Contacts the 5S and 23S rRNAs.

This is one of the proteins that bind and probably mediate the attachment of the 5S RNA into the large ribosomal subunit, where it forms part of the central protuberance. In Cupriavidus pinatubonensis (strain JMP 134 / LMG 1197) (Cupriavidus necator (strain JMP 134)), this protein is Large ribosomal subunit protein uL18.